The following is a 409-amino-acid chain: Putative lipoate-protein ligase A (409 aa).

In terms of domain architecture, BPL/LPL catalytic spans 146–330; the sequence is GPDNCRLLFY…RFQKTFKVDG (185 aa). ATP contacts are provided by residues Arg-188, 193 to 196, and Lys-249; that span reads GTVL. Lys-249 serves as a coordination point for (R)-lipoate.

This sequence belongs to the LplA family. As to quaternary structure, monomer.

The catalysed reaction is L-lysyl-[lipoyl-carrier protein] + (R)-lipoate + ATP = N(6)-[(R)-lipoyl]-L-lysyl-[lipoyl-carrier protein] + AMP + diphosphate + H(+). It functions in the pathway protein modification; protein lipoylation via exogenous pathway; protein N(6)-(lipoyl)lysine from lipoate: step 1/2. It participates in protein modification; protein lipoylation via exogenous pathway; protein N(6)-(lipoyl)lysine from lipoate: step 2/2. Functionally, catalyzes both the ATP-dependent activation of exogenously supplied lipoate to lipoyl-AMP and the transfer of the activated lipoyl onto the lipoyl domains of lipoate-dependent enzymes. This Saccharomyces cerevisiae (strain RM11-1a) (Baker's yeast) protein is Putative lipoate-protein ligase A (AIM22).